The sequence spans 488 residues: Proline--tRNA ligase (488 aa).

Belongs to the class-II aminoacyl-tRNA synthetase family. ProS type 3 subfamily. In terms of assembly, homodimer.

The protein resides in the cytoplasm. The enzyme catalyses tRNA(Pro) + L-proline + ATP = L-prolyl-tRNA(Pro) + AMP + diphosphate. Its function is as follows. Catalyzes the attachment of proline to tRNA(Pro) in a two-step reaction: proline is first activated by ATP to form Pro-AMP and then transferred to the acceptor end of tRNA(Pro). The sequence is that of Proline--tRNA ligase from Borreliella afzelii (strain PKo) (Borrelia afzelii).